The following is a 443-amino-acid chain: MTAKAPRVGMISLGCPKALVDSERILTQLRMEGYEVVATYEDADVVVVNTCGFIDTAKAESLEVIGEAIKENGKVIVTGCMGVDASVIRAVHPSVLSVTGPQQYEQVVNAVHDVVPPRKDHNPLIDLVPPQGVKLTPRHYAYLKISEGCNHSCSFCIIPSMRGKLVSRPVGDVLDEAKRLVKSGVKELLVISQDTSAYGVDVKYRTGFWDGQPVKTRMTELCQALGSMGVWVRLHYVYPYPHVDELIPLMAAGKILPYLDIPFQHASPKILKLMKRPAFEDKTLARIKNWREQCPDLIIRSTFIVGFPGETEEDFQYLLDWLTEAQLDRVGCFQYSPVEGAPANLLDAAIVPDDVKQDRWDRFMAHQQAISAARLQMKIGKEIEVLIDEVDDRGAVGRCFFDAPEIDGNVFIGLEDGSTVQPGDKIMCRVTDADEYDLWAEML.

In terms of domain architecture, MTTase N-terminal spans 6 to 116; it reads PRVGMISLGC…VVNAVHDVVP (111 aa). [4Fe-4S] cluster is bound by residues Cys15, Cys51, Cys80, Cys149, Cys153, and Cys156. In terms of domain architecture, Radical SAM core spans 135–373; the sequence is LTPRHYAYLK…MAHQQAISAA (239 aa). The 68-residue stretch at 376-443 folds into the TRAM domain; the sequence is QMKIGKEIEV…DEYDLWAEML (68 aa).

Belongs to the methylthiotransferase family. RimO subfamily. Requires [4Fe-4S] cluster as cofactor.

The protein localises to the cytoplasm. It catalyses the reaction L-aspartate(89)-[ribosomal protein uS12]-hydrogen + (sulfur carrier)-SH + AH2 + 2 S-adenosyl-L-methionine = 3-methylsulfanyl-L-aspartate(89)-[ribosomal protein uS12]-hydrogen + (sulfur carrier)-H + 5'-deoxyadenosine + L-methionine + A + S-adenosyl-L-homocysteine + 2 H(+). Its function is as follows. Catalyzes the methylthiolation of an aspartic acid residue of ribosomal protein uS12. In Pseudomonas syringae pv. tomato (strain ATCC BAA-871 / DC3000), this protein is Ribosomal protein uS12 methylthiotransferase RimO.